The following is a 352-amino-acid chain: MAGFTDLREKLKSMTPHRDKVFEYSNGEKRKYRESDDDESEYEERRDAEARRVKSGIKQASIFTLEECARIEAKIDEVVAKADKGLYREHTVDRAPLRNKYFFGEGYTYGAQLEKRGPGQERLYSKGEVDDIPDWVHELVIDRLVTHGVIPEGFVNSAVINDYQPGGCIVSHVDPIHIFERPIVSVSFFSDSALCFGCKFLFKPIRVSEPVLHLPVRRGSVTVLSGYAADDITHCIRPQDIKERRAVIILRKTRADAPRLDSNSLSPSIVSPKRRHILKAKRSHRKADPDAAHRPRVLEMDKELQRRSLSSRQRRHDDGSSENSWRRADDREPAARYTHDHAPTRRVKMRRH.

The span at 18-34 shows a compositional bias: basic and acidic residues; sequence RDKVFEYSNGEKRKYRE. Residues 18–47 form a disordered region; it reads RDKVFEYSNGEKRKYRESDDDESEYEERRD. Residue Tyr107 is part of the active site. Positions 161, 163, and 172 each coordinate 2-oxoglutarate. Fe cation is bound by residues His172, Asp174, and His234. Residues Cys198 and Cys235 are joined by a disulfide bond. 2-oxoglutarate contacts are provided by His234 and Arg245. A disordered region spans residues 260-352; the sequence is LDSNSLSPSI…PTRRVKMRRH (93 aa). Positions 272 to 285 are enriched in basic residues; that stretch reads PKRRHILKAKRSHR. 2 stretches are compositionally biased toward basic and acidic residues: residues 286–306 and 315–343; these read KADP…ELQR and RHDD…DHAP.

It belongs to the alkB family. Monomer. The cofactor is Fe(2+).

The protein resides in the nucleus speckle. It catalyses the reaction an N(6)-methyladenosine in mRNA + 2-oxoglutarate + O2 = an adenosine in mRNA + formaldehyde + succinate + CO2. Functionally, dioxygenase that specifically demethylates N(6)-methyladenosine (m6A) RNA, the most prevalent internal modification of messenger RNA (mRNA) in higher eukaryotes. Demethylates RNA by oxidative demethylation, which requires molecular oxygen, alpha-ketoglutarate and iron. Demethylation of m6A mRNA affects mRNA processing, translation and export. The sequence is that of RNA demethylase ALKBH5 (alkbh5) from Danio rerio (Zebrafish).